We begin with the raw amino-acid sequence, 152 residues long: uncharacterized protein (152 aa).

The N-linked (GlcNAc...) asparagine; by host glycan is linked to Asn-2. Transmembrane regions (helical) follow at residues 5–25 (MILL…MNLW), 36–56 (LNDF…CYIL), and 68–88 (LIIT…QAFI). N-linked (GlcNAc...) asparagine; by host glycosylation occurs at Asn-113.

It localises to the membrane. This is an uncharacterized protein from Acanthamoeba polyphaga mimivirus (APMV).